The following is a 145-amino-acid chain: Large ribosomal subunit protein uL13 (145 aa).

It belongs to the universal ribosomal protein uL13 family. Part of the 50S ribosomal subunit.

This protein is one of the early assembly proteins of the 50S ribosomal subunit, although it is not seen to bind rRNA by itself. It is important during the early stages of 50S assembly. The protein is Large ribosomal subunit protein uL13 of Staphylococcus haemolyticus (strain JCSC1435).